A 237-amino-acid polypeptide reads, in one-letter code: ATP synthase subunit a (237 aa).

6 helical membrane passes run 18–38, 77–97, 103–123, 132–152, 185–205, and 209–229; these read STLW…VGTL, IFTL…PMAF, IAVT…LGFM, LFWV…IEVI, LILF…AIVA, and LEIL…CVYL.

The protein belongs to the ATPase A chain family. F-type ATPases have 2 components, CF(1) - the catalytic core - and CF(0) - the membrane proton channel. CF(1) has five subunits: alpha(3), beta(3), gamma(1), delta(1), epsilon(1). CF(0) has three main subunits: a(1), b(2) and c(9-12). The alpha and beta chains form an alternating ring which encloses part of the gamma chain. CF(1) is attached to CF(0) by a central stalk formed by the gamma and epsilon chains, while a peripheral stalk is formed by the delta and b chains.

The protein localises to the cellular chromatophore membrane. In terms of biological role, key component of the proton channel; it plays a direct role in the translocation of protons across the membrane. This chain is ATP synthase subunit a, found in Rhodobacter capsulatus (Rhodopseudomonas capsulata).